A 628-amino-acid polypeptide reads, in one-letter code: Putative ankyrin repeat protein L769 (628 aa).

ANK repeat units lie at residues 217–246 (NYMD…EYDF), 333–362 (DLDE…DINR), 421–451 (TAEN…NHDL), and 512–542 (NNLK…DQDY).

This Acanthamoeba polyphaga mimivirus (APMV) protein is Putative ankyrin repeat protein L769.